Reading from the N-terminus, the 152-residue chain is NADH-quinone oxidoreductase subunit I 1 (152 aa).

4Fe-4S ferredoxin-type domains lie at methionine 53–aspartate 83 and valine 94–glycine 123. The [4Fe-4S] cluster site is built by cysteine 63, cysteine 66, cysteine 69, cysteine 73, cysteine 103, cysteine 106, cysteine 109, and cysteine 113.

It belongs to the complex I 23 kDa subunit family. NDH-1 is composed of 14 different subunits. Subunits NuoA, H, J, K, L, M, N constitute the membrane sector of the complex. [4Fe-4S] cluster serves as cofactor.

The protein resides in the cell inner membrane. The catalysed reaction is a quinone + NADH + 5 H(+)(in) = a quinol + NAD(+) + 4 H(+)(out). In terms of biological role, NDH-1 shuttles electrons from NADH, via FMN and iron-sulfur (Fe-S) centers, to quinones in the respiratory chain. The immediate electron acceptor for the enzyme in this species is believed to be ubiquinone. Couples the redox reaction to proton translocation (for every two electrons transferred, four hydrogen ions are translocated across the cytoplasmic membrane), and thus conserves the redox energy in a proton gradient. The polypeptide is NADH-quinone oxidoreductase subunit I 1 (Koribacter versatilis (strain Ellin345)).